Reading from the N-terminus, the 500-residue chain is Glutamate decarboxylase (500 aa).

Lys-277 bears the N6-(pyridoxal phosphate)lysine mark. The tract at residues 469 to 500 is calmodulin-binding; it reads VHKKTDSEVQLEMITAWKKFVEEKKKKTNRVC.

It belongs to the group II decarboxylase family. In terms of assembly, homodimer. The cofactor is pyridoxal 5'-phosphate.

It carries out the reaction L-glutamate + H(+) = 4-aminobutanoate + CO2. Functionally, catalyzes the production of GABA. The calmodulin-binding is calcium-dependent and it is proposed that this may, directly or indirectly, form a calcium regulated control of GABA biosynthesis. In Petunia hybrida (Petunia), this protein is Glutamate decarboxylase (GAD).